The sequence spans 644 residues: Macrolide export ATP-binding/permease protein MacB (644 aa).

Residues 6–244 (LELDGVWRRF…SQATEAQPDG (239 aa)) enclose the ABC transporter domain. 42–49 (GASGSGKS) serves as a coordination point for ATP. 5 consecutive transmembrane segments (helical) span residues 271–291 (ALTMLGIVIGIASVVSVIAIG), 415–435 (EAVGRVILVGMVPATVIGVVA), 517–537 (LSLLLALVAVISLVVGGIGVM), 574–594 (LVCLVGGAIGVALSYGVSFVF), and 609–629 (VIALAVACSSLIGVLFGFLPA).

It belongs to the ABC transporter superfamily. Macrolide exporter (TC 3.A.1.122) family. In terms of assembly, homodimer.

The protein localises to the cell inner membrane. Functionally, non-canonical ABC transporter that contains transmembrane domains (TMD), which form a pore in the inner membrane, and an ATP-binding domain (NBD), which is responsible for energy generation. Confers resistance against macrolides. In Chromobacterium violaceum (strain ATCC 12472 / DSM 30191 / JCM 1249 / CCUG 213 / NBRC 12614 / NCIMB 9131 / NCTC 9757 / MK), this protein is Macrolide export ATP-binding/permease protein MacB.